The following is a 208-amino-acid chain: Thymidylate kinase (208 aa).

10–17 (GGEGAGKS) serves as a coordination point for ATP.

The protein belongs to the thymidylate kinase family.

The enzyme catalyses dTMP + ATP = dTDP + ADP. In terms of biological role, phosphorylation of dTMP to form dTDP in both de novo and salvage pathways of dTTP synthesis. This is Thymidylate kinase from Alcanivorax borkumensis (strain ATCC 700651 / DSM 11573 / NCIMB 13689 / SK2).